Reading from the N-terminus, the 330-residue chain is Probable L-lactate dehydrogenase (330 aa).

R105, N137, and R168 together coordinate substrate. N137 is a binding site for NAD(+). H192 acts as the Proton acceptor in catalysis.

The protein belongs to the LDH/MDH superfamily. LDH family. Homotetramer.

It localises to the cytoplasm. It carries out the reaction (S)-lactate + NAD(+) = pyruvate + NADH + H(+). It participates in fermentation; pyruvate fermentation to lactate; (S)-lactate from pyruvate: step 1/1. The chain is Probable L-lactate dehydrogenase from Schizosaccharomyces pombe (strain 972 / ATCC 24843) (Fission yeast).